We begin with the raw amino-acid sequence, 126 residues long: Holo-[acyl-carrier-protein] synthase (126 aa).

Mg(2+) contacts are provided by Asp-9 and Glu-58.

It belongs to the P-Pant transferase superfamily. AcpS family. It depends on Mg(2+) as a cofactor.

Its subcellular location is the cytoplasm. It carries out the reaction apo-[ACP] + CoA = holo-[ACP] + adenosine 3',5'-bisphosphate + H(+). Transfers the 4'-phosphopantetheine moiety from coenzyme A to a Ser of acyl-carrier-protein. This is Holo-[acyl-carrier-protein] synthase from Vibrio campbellii (strain ATCC BAA-1116).